Here is a 548-residue protein sequence, read N- to C-terminus: Chaperonin GroEL (548 aa).

ATP-binding positions include threonine 30–proline 33, lysine 51, aspartate 87–threonine 91, glycine 415, asparagine 479–alanine 481, and aspartate 495.

The protein belongs to the chaperonin (HSP60) family. Forms a cylinder of 14 subunits composed of two heptameric rings stacked back-to-back. Interacts with the co-chaperonin GroES.

It localises to the cytoplasm. It carries out the reaction ATP + H2O + a folded polypeptide = ADP + phosphate + an unfolded polypeptide.. Together with its co-chaperonin GroES, plays an essential role in assisting protein folding. The GroEL-GroES system forms a nano-cage that allows encapsulation of the non-native substrate proteins and provides a physical environment optimized to promote and accelerate protein folding. The chain is Chaperonin GroEL from Oleidesulfovibrio alaskensis (strain ATCC BAA-1058 / DSM 17464 / G20) (Desulfovibrio alaskensis).